The primary structure comprises 153 residues: ATP synthase subunit b' (153 aa).

The chain crosses the membrane as a helical span at residues 23–40 (LMAIQVVALTYILNSLFF).

Belongs to the ATPase B chain family. As to quaternary structure, F-type ATPases have 2 components, F(1) - the catalytic core - and F(0) - the membrane proton channel. F(1) has five subunits: alpha(3), beta(3), gamma(1), delta(1), epsilon(1). F(0) has four main subunits: a(1), b(1), b'(1) and c(10-14). The alpha and beta chains form an alternating ring which encloses part of the gamma chain. F(1) is attached to F(0) by a central stalk formed by the gamma and epsilon chains, while a peripheral stalk is formed by the delta, b and b' chains.

Its subcellular location is the cellular thylakoid membrane. Its function is as follows. F(1)F(0) ATP synthase produces ATP from ADP in the presence of a proton or sodium gradient. F-type ATPases consist of two structural domains, F(1) containing the extramembraneous catalytic core and F(0) containing the membrane proton channel, linked together by a central stalk and a peripheral stalk. During catalysis, ATP synthesis in the catalytic domain of F(1) is coupled via a rotary mechanism of the central stalk subunits to proton translocation. In terms of biological role, component of the F(0) channel, it forms part of the peripheral stalk, linking F(1) to F(0). The b'-subunit is a diverged and duplicated form of b found in plants and photosynthetic bacteria. This is ATP synthase subunit b' from Prochlorococcus marinus (strain MIT 9515).